The chain runs to 263 residues: uncharacterized protein (263 aa).

The region spanning 107–246 (ILGVLNGDGS…CCSFLEKLGI (140 aa)) is the DOD-type homing endonuclease domain.

This is an uncharacterized protein from Methanocaldococcus jannaschii (strain ATCC 43067 / DSM 2661 / JAL-1 / JCM 10045 / NBRC 100440) (Methanococcus jannaschii).